The following is a 319-amino-acid chain: tRNA uridine(34) hydroxylase (319 aa).

Positions 127–221 constitute a Rhodanese domain; the sequence is KQEDTVIIDA…YGKDPEVQGE (95 aa). Catalysis depends on C181, which acts as the Cysteine persulfide intermediate.

Belongs to the TrhO family.

The enzyme catalyses uridine(34) in tRNA + AH2 + O2 = 5-hydroxyuridine(34) in tRNA + A + H2O. Its function is as follows. Catalyzes oxygen-dependent 5-hydroxyuridine (ho5U) modification at position 34 in tRNAs. This Bacillus cereus (strain ATCC 10987 / NRS 248) protein is tRNA uridine(34) hydroxylase.